A 4351-amino-acid chain; its full sequence is Protocadherin Fat 2 (4351 aa).

Positions 1–18 (MTLVLLGVAMVLLHRAAC) are cleaved as a signal peptide. Over 19-4050 (EKPLEETITP…IKRGDWGQQE (4032 aa)) the chain is Extracellular. Cadherin domains lie at 34–148 (THSL…KPLF) and 149–256 (SPPS…PPVI). 4 N-linked (GlcNAc...) asparagine glycosylation sites follow: Asn39, Asn210, Asn280, and Asn330. Cadherin domains follow at residues 363–458 (EKAV…APVF), 459–564 (NRSS…QPMF), 565–669 (EEVN…VPVQ), 716–820 (DHFP…PPRF), 821–925 (PPGG…PPQC), 926–1032 (ITEH…SPHF), 1033–1142 (SSFV…RPVF), 1138–1242 (SRPV…SPMF), 1243–1346 (SHKL…SSIP), 1350–1448 (DESH…RPQF), 1449–1555 (LQDH…SPHF), 1556–1660 (TQPR…APIF), 1661–1758 (SKDE…APAF), 1759–1872 (LKST…PPRF), 1873–1968 (SEQI…SLQF), 1969–2070 (DQDI…IPEF), 2071–2171 (QHLP…NPLF), 2172–2272 (QSPY…PPTF), 2273–2379 (SQLV…PPEF), 2380–2481 (REPQ…SPEF), 2482–2585 (QQNV…APQF), 2586–2692 (KASG…LPKF), 2693–2799 (SEPL…RPVF), 2800–2908 (EADP…PPRF), 2909–3013 (ASED…SPQC), 3014–3115 (SQLL…APRF), 3116–3220 (FPSH…LPIF), 3221–3323 (LNSE…HPRF), 3324–3428 (THDL…PPRF), 3429–3533 (FQLN…PPST), and 3534–3631 (LPLE…APQQ). Asn459, Asn568, Asn627, and Asn789 each carry an N-linked (GlcNAc...) asparagine glycan. Residue Asn996 is glycosylated (N-linked (GlcNAc...) asparagine). 3 N-linked (GlcNAc...) asparagine glycosylation sites follow: Asn1175, Asn1276, and Asn1417. N-linked (GlcNAc...) asparagine glycosylation is found at Asn1899, Asn1998, Asn2007, Asn2102, Asn2165, Asn2183, Asn2325, Asn2368, Asn2387, Asn2430, Asn2470, Asn2547, and Asn2597. Asn3127, Asn3278, and Asn3312 each carry an N-linked (GlcNAc...) asparagine glycan. N-linked (GlcNAc...) asparagine glycosylation is found at Asn3432, Asn3603, Asn3770, Asn3774, Asn3815, Asn3842, Asn3875, and Asn3906. Residues 3775–3946 (GTTWRFSGQS…YLETWALSQC (172 aa)) enclose the Laminin G-like domain. Intrachain disulfides connect Cys3914-Cys3946, Cys3953-Cys3964, Cys3958-Cys3974, and Cys3976-Cys3985. EGF-like domains follow at residues 3949-3986 (PGTT…RNCE) and 3988-4024 (GREN…DRCE). Asn3991 is a glycosylation site (N-linked (GlcNAc...) asparagine). 3 cysteine pairs are disulfide-bonded: Cys3992/Cys4003, Cys3997/Cys4012, and Cys4014/Cys4023. Residues 4051–4071 (FLVIIVALPLLIIATVGLLLY) traverse the membrane as a helical segment. At 4072-4351 (CRRCKSHKPV…DYGSCEEVMF (280 aa)) the chain is on the cytoplasmic side. Positions 4313-4340 (DCEVNGGPAPGRSQPRAPPNYEGSDMVE) are disordered.

Homodimer.

It is found in the cell membrane. The protein localises to the cell junction. It localises to the golgi apparatus. The protein resides in the trans-Golgi network. Involved in the regulation of cell migration. May be involved in mediating the organization of the parallel fibers of granule cells during cerebellar development. The polypeptide is Protocadherin Fat 2 (Fat2) (Mus musculus (Mouse)).